The chain runs to 277 residues: Phosphatidylglycerol--prolipoprotein diacylglyceryl transferase (277 aa).

Transmembrane regions (helical) follow at residues 22–42 (ISIR…YIVV), 59–79 (LFFY…CLFY), 107–127 (GYEG…LWLY), and 133–153 (MNYM…ACFI). Arginine 154 contributes to the a 1,2-diacyl-sn-glycero-3-phospho-(1'-sn-glycerol) binding site. Transmembrane regions (helical) follow at residues 186–206 (PAQL…MFLY), 216–236 (GFFF…VEFL), and 251–271 (MGQW…FFYG).

It belongs to the Lgt family.

The protein resides in the cell inner membrane. It catalyses the reaction L-cysteinyl-[prolipoprotein] + a 1,2-diacyl-sn-glycero-3-phospho-(1'-sn-glycerol) = an S-1,2-diacyl-sn-glyceryl-L-cysteinyl-[prolipoprotein] + sn-glycerol 1-phosphate + H(+). It participates in protein modification; lipoprotein biosynthesis (diacylglyceryl transfer). Functionally, catalyzes the transfer of the diacylglyceryl group from phosphatidylglycerol to the sulfhydryl group of the N-terminal cysteine of a prolipoprotein, the first step in the formation of mature lipoproteins. The sequence is that of Phosphatidylglycerol--prolipoprotein diacylglyceryl transferase from Bacteroides fragilis (strain ATCC 25285 / DSM 2151 / CCUG 4856 / JCM 11019 / LMG 10263 / NCTC 9343 / Onslow / VPI 2553 / EN-2).